The following is a 298-amino-acid chain: Probable alpha-L-glutamate ligase 2 (298 aa).

The region spanning 104–287 (MQLLSRQGIG…VADAIICFME (184 aa)) is the ATP-grasp domain. Residues Lys141, 178–179 (EY), Asp187, and 211–213 (RSN) contribute to the ATP site. Mg(2+)-binding residues include Asp248, Glu260, and Asn262. Mn(2+) is bound by residues Asp248, Glu260, and Asn262.

It belongs to the RimK family. The cofactor is Mg(2+). Mn(2+) serves as cofactor.

The polypeptide is Probable alpha-L-glutamate ligase 2 (Shewanella frigidimarina (strain NCIMB 400)).